A 213-amino-acid polypeptide reads, in one-letter code: LexA repressor (213 aa).

A DNA-binding region (H-T-H motif) is located at residues 29 to 49 (VREICNAVGFKSTSTVHSYLE). Catalysis depends on for autocatalytic cleavage activity residues S136 and K173.

Belongs to the peptidase S24 family. Homodimer.

It carries out the reaction Hydrolysis of Ala-|-Gly bond in repressor LexA.. Functionally, represses a number of genes involved in the response to DNA damage (SOS response), including recA and lexA. In the presence of single-stranded DNA, RecA interacts with LexA causing an autocatalytic cleavage which disrupts the DNA-binding part of LexA, leading to derepression of the SOS regulon and eventually DNA repair. This Acetivibrio thermocellus (strain ATCC 27405 / DSM 1237 / JCM 9322 / NBRC 103400 / NCIMB 10682 / NRRL B-4536 / VPI 7372) (Clostridium thermocellum) protein is LexA repressor.